The sequence spans 449 residues: Methionine aminopeptidase 2 (449 aa).

The interval 1-91 (MAAQAAPELA…PRIPLTTLFP (91 aa)) is disordered. Positions 34–50 (EEAENEGDSEDDRDDEQ) are enriched in acidic residues. A compositionally biased stretch (basic residues) spans 61-75 (KKKKKKRPKKKKKTA). Residue His199 participates in substrate binding. The a divalent metal cation site is built by Asp219, Asp230, and His299. His307 provides a ligand contact to substrate. A divalent metal cation-binding residues include Glu335 and Glu430.

The protein belongs to the peptidase M24A family. Methionine aminopeptidase eukaryotic type 2 subfamily. Co(2+) is required as a cofactor. It depends on Zn(2+) as a cofactor. Requires Mn(2+) as cofactor. Fe(2+) serves as cofactor.

It localises to the cytoplasm. The enzyme catalyses Release of N-terminal amino acids, preferentially methionine, from peptides and arylamides.. Cotranslationally removes the N-terminal methionine from nascent proteins. The N-terminal methionine is often cleaved when the second residue in the primary sequence is small and uncharged (Met-Ala-, Cys, Gly, Pro, Ser, Thr, or Val). The protein is Methionine aminopeptidase 2 of Trichophyton verrucosum (strain HKI 0517).